Reading from the N-terminus, the 263-residue chain is Thymidylate kinase (263 aa).

The transit peptide at 1–51 (MKRICSVSSVQLFSRSFRALASPRSLNYPLQCIKRSSVRMESSNFSSGVRT) directs the protein to the mitochondrion. 66–74 (GLDRSGKST) contacts ATP.

It belongs to the thymidylate kinase family. In terms of tissue distribution, expressed in root, rosette leaves, flower buds, flowers and siliques.

Its subcellular location is the mitochondrion. The protein localises to the cytoplasm. It localises to the nucleus. The protein resides in the nucleoplasm. It carries out the reaction dTMP + ATP = dTDP + ADP. Its pathway is pyrimidine metabolism; dTTP biosynthesis. Catalyzes the conversion of dTMP to dTDP. Involved in the regulation of DNA replication. Is essential to promote the first division of the zygote. In Arabidopsis thaliana (Mouse-ear cress), this protein is Thymidylate kinase.